A 444-amino-acid polypeptide reads, in one-letter code: Transcription activator AKTR-3 (444 aa).

The zn(2)-C6 fungal-type DNA-binding region spans 16-43 (CDFCTQSKLRCNKNKPSCRRCTIQQQPC). Residues 49-89 (RRTGRPPKHPRTANDCQEANGQHGEQDPVTSTPGGSCQQQS) form a disordered region. Residues 50-59 (RTGRPPKHPR) show a composition bias toward basic residues. Positions 76–89 (PVTSTPGGSCQQQS) are enriched in polar residues.

It is found in the nucleus. Its function is as follows. Transcription factor that regulates the expression of the gene clusters that mediate the biosynthesis of the host-selective toxins (HSTs) AK-toxins responsible for Japanese pear black spot disease by the Japanese pear pathotype. AK-toxins are esters of 9,10-epoxy 8-hydroxy 9-methyldecatrienoic acid (EDA). On cellular level, AK-toxins affect plasma membrane of susceptible cells and cause a sudden increase in loss of K(+) after a few minutes of toxin treatment. The polypeptide is Transcription activator AKTR-3 (Alternaria alternata (Alternaria rot fungus)).